We begin with the raw amino-acid sequence, 493 residues long: MSKKGKKPKLPKAPLSEEDQLLIFQQKMLADEEAAKKKERLLTQFLKDKLAKEEHNSALNLNKINTQWRTILREVKTRELHQDIEILSQTFERVVDCKDSVIKSLAKDLTEAEEQYAHALRSHLHNIDQLLTLQRRRLGLLEENYNMELEVLTKEFETERKLIIDHHEKEMHYLQDVFMAMEQNYIDSEYESKLEFQSMWDDLKNKNLEEKHFLRLQLENIVEDLWRRFQDALKNYTDATEDRKIAFEYLKVKDEKSSKEIETQMKKIQKLQETIGILKGKIVAHSREGEWQNQCIRNNKELVHVQLRKLKVQRTQARTLSQENLVKLTLESNATLKALKKVVEKGEKILKLAEICRKFETEEEKVLPFYSSVLTPEEQEEAKLQNPEDITEDLAKIMMDYAGMENFWKRYNKVKLEVLSLQHRRLQLLDISSKLREMLKQYLDGISVSDEVLSHLNPLFVVNHRSNLPQLPPPSAQPVYNVIEAAHIASHIL.

Coiled-coil stretches lie at residues 99–163 and 253–280; these read DSVI…RKLI and KDEKSSKEIETQMKKIQKLQETIGILKG.

Belongs to the DRC2 family. As to quaternary structure, component of the nexin-dynein regulatory complex (N-DRC). Interacts with DRC1.

The protein resides in the cytoplasm. Its subcellular location is the cytoskeleton. The protein localises to the flagellum basal body. It localises to the cell projection. It is found in the cilium. The protein resides in the flagellum. Its subcellular location is the flagellum axoneme. In terms of biological role, component of the nexin-dynein regulatory complex (N-DRC), a key regulator of ciliary/flagellar motility which maintains the alignment and integrity of the distal axoneme and regulates microtubule sliding in motile axonemes. Plays a critical role in the assembly of N-DRC and also stabilizes the assembly of multiple inner dynein arms and radial spokes. Coassembles with DRC1 to form a central scaffold needed for assembly of the N-DRC and its attachment to the outer doublet microtubules. This Mus musculus (Mouse) protein is Dynein regulatory complex subunit 2 (Ccdc65).